The primary structure comprises 349 residues: Beta-glucanase (349 aa).

An N-terminal signal peptide occupies residues 1–27 (MNIKKTAVKSALAVAAAAAALTTNVSA). One can recognise a GH16 domain in the interval 28–197 (KDFSGAELYT…WVKVYKYTPG (170 aa)). The active-site Nucleophile is the Glu-79. Catalysis depends on Glu-83, which acts as the Proton donor. The tract at residues 258 to 311 (SFNGQVPRDDEPAPQSSSSAPASSSSVPASSSSVPASSSSAFVPPSSSSATNAI) is disordered. Over residues 270 to 307 (APQSSSSAPASSSSVPASSSSVPASSSSAFVPPSSSSA) the composition is skewed to low complexity. A run of 5 repeats spans residues 271-277 (PQSSSSA), 278-284 (PASSSSV), 285-291 (PASSSSV), 292-298 (PASSSSA), and 301-307 (PPSSSSA). The 5 X 7 AA tandem repeats of P-X-S-S-S-S-X stretch occupies residues 271-307 (PQSSSSAPASSSSVPASSSSVPASSSSAFVPPSSSSA).

It belongs to the glycosyl hydrolase 16 family.

It catalyses the reaction Hydrolysis of (1-&gt;4)-beta-D-glucosidic linkages in beta-D-glucans containing (1-&gt;3)- and (1-&gt;4)-bonds.. The sequence is that of Beta-glucanase from Fibrobacter succinogenes (strain ATCC 19169 / S85).